A 556-amino-acid chain; its full sequence is Methyltransferase/ribosomally synthesized type II borosin cyclic peptide precursor pgiMA1 (556 aa).

Residues Met-1–Leu-250 form a methyltransferase domain region. Residues Arg-74, Tyr-78, and Tyr-100 contribute to the active site. The S-adenosyl-L-methionine site is built by Tyr-100, His-102, Val-105, Gln-174, Gly-212, Ser-243, and Thr-244. The segment at Thr-251 to Arg-377 is clasp domain. A precursor leader region spans residues Ala-378–Gly-386. Asp-421, Asp-434, Asp-447, Asp-460, Asp-473, Asp-486, Asp-499, Asp-512, Asp-525, and Asp-538 each carry N-methylaspartate. A propeptide spanning residues Ala-543 to Met-556 is cleaved from the precursor.

It in the N-terminal section; belongs to the precorrin methyltransferase family. In terms of assembly, homodimer. PgiMA1 automethylates at Asp-421, Asp-434, Asp-447, Asp-460, Asp-473, Asp-486, Asp-499, Asp-512, Asp-525 and Asp-538 before being processed, probably by the M64 family peptidase found in the genes surrounding PgiMA1, to release methylated peptides which then undergos macrocyclization with the N-terminus of the modified core peptides. Peptide backbone alpha-N-methylations change the physicochemical properties of amide bonds to provide structural constraints and other favorable characteristics including biological membrane permeability to peptides.

It participates in secondary metabolite biosynthesis. In terms of biological role, fusion protein of the methyltransferase pgiM1 and 12 type II borosin core peptides; part of the gene cluster that mediates the biosynthesis of a type II borosin, a highly methylated cyclic peptide with potent biological activities. Type II borosins derive from the C-terminus of the fusion protein, and it is the same protein that methylates its own C-terminus using S-adenosyl methionine (SAM). The C-terminus is subsequently cleaved off and macrocyclized by a prolyloligopeptidase to give the final product. In Phlebiopsis gigantea (strain 11061_1 CR5-6) (White-rot fungus), this protein is Methyltransferase/ribosomally synthesized type II borosin cyclic peptide precursor pgiMA1.